Consider the following 999-residue polypeptide: Sarcoplasmic/endoplasmic reticulum calcium ATPase 3 (999 aa).

Met1 bears the N-acetylmethionine mark. The Cytoplasmic portion of the chain corresponds to 1–48 (MEEAHLLSAADVLRRFSVTAEGGLSLEQVTDARERYGPNELPTEEGKS). Ser17 carries the phosphoserine modification. The residue at position 19 (Thr19) is a Phosphothreonine. Ser25 carries the post-translational modification Phosphoserine. A helical transmembrane segment spans residues 49–69 (LWELVVEQFEDLLVRILLLAA). Residues 70–89 (LVSFVLAWFEEGEETTTAFV) are Lumenal-facing. The helical transmembrane segment at 90–110 (EPLVIMLILVANAIVGVWQER) threads the bilayer. At 111 to 253 (NAESAIEALK…PERTPLQRKL (143 aa)) the chain is on the cytoplasmic side. The chain crosses the membrane as a helical span at residues 254–273 (DEFGRQLSHAISVICVAVWV). The Lumenal segment spans residues 274-295 (INIGHFADPAHGGSWLRGAVYY). A helical transmembrane segment spans residues 296 to 313 (FKIAVALAVAAIPEGLPA). Ca(2+)-binding residues include Val304, Ala305, Ile307, and Glu309. The Cytoplasmic segment spans residues 314-757 (VITTCLALGT…EEGRAIYNNM (444 aa)). Catalysis depends on Asp351, which acts as the 4-aspartylphosphate intermediate. Mg(2+) is bound by residues Asp351 and Thr353. Position 353 (Thr353) interacts with ATP. The interaction with phospholamban 1 stretch occupies residues 370-400 (AEAEAGTCRLHEFTISGTTYTPEGEVRQGEQ). Thr415 carries the post-translational modification Phosphothreonine. ATP is bound by residues Glu442, Arg489, Lys515, Arg560, Thr625, Gly626, and Asp627. Ser662 carries the post-translational modification Phosphoserine. Residues Arg678 and Lys684 each coordinate ATP. Asp703 serves as a coordination point for Mg(2+). Asn706 contacts ATP. A helical membrane pass occupies residues 758 to 777 (KQFIRYLISSNVGEVVCIFL). The Ca(2+) site is built by Asn768 and Glu771. Topologically, residues 778–787 (TAILGLPEAL) are lumenal. A helical transmembrane segment spans residues 788–808 (IPVQLLWVNLVTDGLPATALG). Positions 788–808 (IPVQLLWVNLVTDGLPATALG) are interaction with phospholamban 2. 3 residues coordinate Ca(2+): Asn796, Thr799, and Asp800. Residues 809–828 (FNPPDLDIMEKPPRNPREAL) lie on the Cytoplasmic side of the membrane. The helical transmembrane segment at 829-851 (ISGWLFFRYLAIGVYVGLATVAA) threads the bilayer. The Lumenal portion of the chain corresponds to 852-897 (ATWWFLYDTEGPQVTFYQLRNFLKCSEDNPLFAGIDCKVFESRFPT). A helical membrane pass occupies residues 898-917 (TMALSVLVTIEMCNALNSVS). Glu908 is a binding site for Ca(2+). At 918–930 (ENQSLLRMPPWLN) the chain is on the cytoplasmic side. Residues 931–949 (PWLLGAVVMSMALHFLILL) traverse the membrane as a helical segment. The Lumenal portion of the chain corresponds to 950 to 964 (VPPLPLIFQVTPLSG). Residues 965–985 (RQWGVVLQMSLPVILLDEALK) traverse the membrane as a helical segment. The Cytoplasmic segment spans residues 986 to 999 (YLSRNHMDEKKDLK).

It belongs to the cation transport ATPase (P-type) (TC 3.A.3) family. Type IIA subfamily. Interacts with sarcolipin (SLN). Interacts with phospholamban (PLN). Interacts with myoregulin (MRLN). Interacts with DWORF. Interacts with VMP1. Interacts with TUNAR; the interaction occurs at low levels in low glucose conditions and is increased by high glucose levels. Requires Mg(2+) as cofactor.

The protein localises to the endoplasmic reticulum membrane. The protein resides in the sarcoplasmic reticulum membrane. It carries out the reaction Ca(2+)(in) + ATP + H2O = Ca(2+)(out) + ADP + phosphate + H(+). Its activity is regulated as follows. Inhibited by sarcolipin (SLN), phospholamban (PLN) and myoregulin (MRLN). Enhanced by DWORF; DWORF increases activity by displacing sarcolipin (SLN), phospholamban (PLN) and myoregulin (MRLN). Its function is as follows. This magnesium-dependent enzyme catalyzes the hydrolysis of ATP coupled with the transport of calcium. Transports calcium ions from the cytosol into the sarcoplasmic/endoplasmic reticulum lumen. Contributes to calcium sequestration involved in muscular excitation/contraction. In Mus musculus (Mouse), this protein is Sarcoplasmic/endoplasmic reticulum calcium ATPase 3 (Atp2a3).